The primary structure comprises 417 residues: UDP-N-acetylglucosamine 1-carboxyvinyltransferase (417 aa).

22–23 is a binding site for phosphoenolpyruvate; the sequence is KN. Arg92 contacts UDP-N-acetyl-alpha-D-glucosamine. Cys116 functions as the Proton donor in the catalytic mechanism. At Cys116 the chain carries 2-(S-cysteinyl)pyruvic acid O-phosphothioketal. Positions 304 and 326 each coordinate UDP-N-acetyl-alpha-D-glucosamine.

The protein belongs to the EPSP synthase family. MurA subfamily.

The protein localises to the cytoplasm. The enzyme catalyses phosphoenolpyruvate + UDP-N-acetyl-alpha-D-glucosamine = UDP-N-acetyl-3-O-(1-carboxyvinyl)-alpha-D-glucosamine + phosphate. Its pathway is cell wall biogenesis; peptidoglycan biosynthesis. Functionally, cell wall formation. Adds enolpyruvyl to UDP-N-acetylglucosamine. The polypeptide is UDP-N-acetylglucosamine 1-carboxyvinyltransferase (Desulforapulum autotrophicum (strain ATCC 43914 / DSM 3382 / VKM B-1955 / HRM2) (Desulfobacterium autotrophicum)).